The sequence spans 124 residues: 5-hydroxyisourate hydrolase (124 aa).

Residues H15, R53, and Y121 each contribute to the substrate site.

The protein belongs to the transthyretin family. 5-hydroxyisourate hydrolase subfamily. Homotetramer.

The enzyme catalyses 5-hydroxyisourate + H2O = 5-hydroxy-2-oxo-4-ureido-2,5-dihydro-1H-imidazole-5-carboxylate + H(+). Catalyzes the hydrolysis of 5-hydroxyisourate (HIU) to 2-oxo-4-hydroxy-4-carboxy-5-ureidoimidazoline (OHCU). This is 5-hydroxyisourate hydrolase from Mesorhizobium japonicum (strain LMG 29417 / CECT 9101 / MAFF 303099) (Mesorhizobium loti (strain MAFF 303099)).